The sequence spans 1638 residues: DNA polymerase III PolC-type (1638 aa).

The tract at residues 193–212 (SEIKKQRSEERESKNTREAK) is disordered. The span at 194-212 (EIKKQRSEERESKNTREAK) shows a compositional bias: basic and acidic residues. In terms of domain architecture, Exonuclease spans 596–752 (YVVFDVETTG…FDAEATGRLL (157 aa)).

Belongs to the DNA polymerase type-C family. PolC subfamily.

The protein localises to the cytoplasm. The enzyme catalyses DNA(n) + a 2'-deoxyribonucleoside 5'-triphosphate = DNA(n+1) + diphosphate. Its function is as follows. Required for replicative DNA synthesis. This DNA polymerase also exhibits 3' to 5' exonuclease activity. The sequence is that of DNA polymerase III PolC-type from Lactococcus lactis subsp. lactis (strain IL1403) (Streptococcus lactis).